Reading from the N-terminus, the 329-residue chain is Elongation factor Ts (329 aa).

The interval 79–82 is involved in Mg(2+) ion dislocation from EF-Tu; that stretch reads TDFV.

It belongs to the EF-Ts family.

It localises to the cytoplasm. Functionally, associates with the EF-Tu.GDP complex and induces the exchange of GDP to GTP. It remains bound to the aminoacyl-tRNA.EF-Tu.GTP complex up to the GTP hydrolysis stage on the ribosome. This chain is Elongation factor Ts, found in Phocaeicola vulgatus (strain ATCC 8482 / DSM 1447 / JCM 5826 / CCUG 4940 / NBRC 14291 / NCTC 11154) (Bacteroides vulgatus).